The chain runs to 215 residues: Ubiquitin-conjugating enzyme E2 S (215 aa).

In terms of domain architecture, UBC core spans 9–155 (DVIKRVVKEL…AKLFTSIHAS (147 aa)). The Glycyl thioester intermediate role is filled by Cys-93. A disordered region spans residues 159–215 (IDSNNNNENSTTTPTTTTTATTPSTNTASISSPVKKKTETTNSTTTKVQPKKSLKRL). Low complexity predominate over residues 161 to 190 (SNNNNENSTTTPTTTTTATTPSTNTASISS).

The protein belongs to the ubiquitin-conjugating enzyme family.

It catalyses the reaction S-ubiquitinyl-[E1 ubiquitin-activating enzyme]-L-cysteine + [E2 ubiquitin-conjugating enzyme]-L-cysteine = [E1 ubiquitin-activating enzyme]-L-cysteine + S-ubiquitinyl-[E2 ubiquitin-conjugating enzyme]-L-cysteine.. Its pathway is protein modification; protein ubiquitination. Functionally, catalyzes the covalent attachment of ubiquitin to other proteins. Acts as an essential factor of the anaphase promoting complex/cyclosome (APC/C), a cell cycle-regulated ubiquitin ligase that controls progression through mitosis. Acts by specifically elongating polyubiquitin chains initiated by the E2 enzyme ubch10 on APC/C substrates, enhancing the degradation of APC/C substrates by the proteasome and promoting mitotic exit. The sequence is that of Ubiquitin-conjugating enzyme E2 S (ube2s) from Dictyostelium discoideum (Social amoeba).